Consider the following 119-residue polypeptide: Flagellar transcriptional regulator FlhD (119 aa).

It belongs to the FlhD family. Homodimer; disulfide-linked. Forms a heterohexamer composed of two FlhC and four FlhD subunits. Each FlhC binds a FlhD dimer, forming a heterotrimer, and a hexamer assembles by dimerization of two heterotrimers.

It is found in the cytoplasm. Functions in complex with FlhC as a master transcriptional regulator that regulates transcription of several flagellar and non-flagellar operons by binding to their promoter region. Activates expression of class 2 flagellar genes, including fliA, which is a flagellum-specific sigma factor that turns on the class 3 genes. Also regulates genes whose products function in a variety of physiological pathways. This Escherichia fergusonii (strain ATCC 35469 / DSM 13698 / CCUG 18766 / IAM 14443 / JCM 21226 / LMG 7866 / NBRC 102419 / NCTC 12128 / CDC 0568-73) protein is Flagellar transcriptional regulator FlhD.